Here is a 376-residue protein sequence, read N- to C-terminus: Deoxyuridine 5'-triphosphate nucleotidohydrolase (376 aa).

This sequence belongs to the dUTPase family. Requires Mg(2+) as cofactor.

It catalyses the reaction dUTP + H2O = dUMP + diphosphate + H(+). In terms of biological role, involved in nucleotide metabolism: produces dUMP, the immediate precursor of thymidine nucleotides and decreases the intracellular concentration of dUTP to avoid uracil incorporation into viral DNA. The sequence is that of Deoxyuridine 5'-triphosphate nucleotidohydrolase from Human herpesvirus 6B (strain Z29) (HHV-6 variant B).